Reading from the N-terminus, the 740-residue chain is Ion-translocating oxidoreductase complex subunit C (740 aa).

4Fe-4S ferredoxin-type domains are found at residues 369–397 and 407–436; these read GEPQ…QQLY and KATT…VQYF. The [4Fe-4S] cluster site is built by Cys377, Cys380, Cys383, Cys387, Cys416, Cys419, Cys422, and Cys426. Disordered stretches follow at residues 602-652, 664-685, and 695-714; these read KLEQ…DPRK, ARKL…PRKA, and KARK…QVDP. Residues 605 to 615 are compositionally biased toward low complexity; that stretch reads QQQANAEPEQQ.

This sequence belongs to the 4Fe4S bacterial-type ferredoxin family. RnfC subfamily. In terms of assembly, the complex is composed of six subunits: RsxA, RsxB, RsxC, RsxD, RsxE and RsxG. The cofactor is [4Fe-4S] cluster.

Its subcellular location is the cell inner membrane. Its function is as follows. Part of a membrane-bound complex that couples electron transfer with translocation of ions across the membrane. Required to maintain the reduced state of SoxR. This chain is Ion-translocating oxidoreductase complex subunit C, found in Escherichia coli O157:H7.